Reading from the N-terminus, the 137-residue chain is Structural protein A137R (137 aa).

The protein belongs to the asfivirus A137R family. In terms of assembly, interacts with host TBK1.

It is found in the virion. The protein localises to the host cytoplasm. Its function is as follows. Plays a role in the inhibition of the host innate immune response. Mechanistically, promotes the autophagy-mediated lysosomal degradation of host TBK1 and affects IRF3 nuclear translocation to block type I IFN production. The protein is Structural protein A137R of Ornithodoros (relapsing fever ticks).